We begin with the raw amino-acid sequence, 336 residues long: Probable GTPase MT1543 (336 aa).

GTP contacts are provided by residues 67–75 (GVPGVGKST), Asp-209, and 245–247 (SAV).

This sequence belongs to the SIMIBI class G3E GTPase family. ArgK/MeaB subfamily. As to quaternary structure, homodimer.

Functionally, probable GTPase. May also bind and hydrolyze ATP. May function as chaperone. This chain is Probable GTPase MT1543, found in Mycobacterium tuberculosis (strain CDC 1551 / Oshkosh).